A 224-amino-acid chain; its full sequence is MSRERERFEEIGKKIKREADAWPHQMAGIRRPMSGPPGTLNTITPCAACKLLRRRCAQECPFSPYFSPHEPHKFASVHKVFGASNVSKMLMEVPESQRADAANSLVYEANVRLRDPVYGCMGAISALQQQVQALQAELTAVRSEILKYKQREAVATLIVPSNSQVAGFHNSGGVSVIAPPPQRPTTPPQPTTAHPPSPSSCVFSQPTTRDLEYGNIESENNYFG.

Residues 44-145 (TPCAACKLLR…AELTAVRSEI (102 aa)) form the LOB domain. A disordered region spans residues 171-224 (SGGVSVIAPPPQRPTTPPQPTTAHPPSPSSCVFSQPTTRDLEYGNIESENNYFG). A compositionally biased stretch (pro residues) spans 178–198 (APPPQRPTTPPQPTTAHPPSP).

The protein belongs to the LOB domain-containing protein family. Expressed in young shoots, roots, stems, leaves and flowers.

The chain is LOB domain-containing protein 15 (LBD15) from Arabidopsis thaliana (Mouse-ear cress).